Consider the following 346-residue polypeptide: Phosphate acyltransferase (346 aa).

This sequence belongs to the PlsX family. As to quaternary structure, homodimer. Probably interacts with PlsY.

The protein resides in the cytoplasm. It catalyses the reaction a fatty acyl-[ACP] + phosphate = an acyl phosphate + holo-[ACP]. It participates in lipid metabolism; phospholipid metabolism. Its function is as follows. Catalyzes the reversible formation of acyl-phosphate (acyl-PO(4)) from acyl-[acyl-carrier-protein] (acyl-ACP). This enzyme utilizes acyl-ACP as fatty acyl donor, but not acyl-CoA. In Pelobacter propionicus (strain DSM 2379 / NBRC 103807 / OttBd1), this protein is Phosphate acyltransferase.